Reading from the N-terminus, the 261-residue chain is uncharacterized protein (261 aa).

The signal sequence occupies residues 1-22 (MGYSKRFALYISVMILIFAIAG). C23 carries the N-palmitoyl cysteine lipid modification. Residue C23 is the site of S-diacylglycerol cysteine attachment.

Belongs to the staphylococcal tandem lipoprotein family.

The protein localises to the cell membrane. This is an uncharacterized protein from Staphylococcus aureus (strain N315).